Consider the following 111-residue polypeptide: Phosphoribosyl-ATP pyrophosphatase (111 aa).

The protein belongs to the PRA-PH family.

It localises to the cytoplasm. The enzyme catalyses 1-(5-phospho-beta-D-ribosyl)-ATP + H2O = 1-(5-phospho-beta-D-ribosyl)-5'-AMP + diphosphate + H(+). It participates in amino-acid biosynthesis; L-histidine biosynthesis; L-histidine from 5-phospho-alpha-D-ribose 1-diphosphate: step 2/9. This chain is Phosphoribosyl-ATP pyrophosphatase, found in Pseudomonas putida (strain GB-1).